A 338-amino-acid polypeptide reads, in one-letter code: DNA-directed RNA polymerase subunit alpha (338 aa).

The segment at M1–N226 is alpha N-terminal domain (alpha-NTD). The interval L243–N338 is alpha C-terminal domain (alpha-CTD).

Belongs to the RNA polymerase alpha chain family. Homodimer. The RNAP catalytic core consists of 2 alpha, 1 beta, 1 beta' and 1 omega subunit. When a sigma factor is associated with the core the holoenzyme is formed, which can initiate transcription.

It catalyses the reaction RNA(n) + a ribonucleoside 5'-triphosphate = RNA(n+1) + diphosphate. In terms of biological role, DNA-dependent RNA polymerase catalyzes the transcription of DNA into RNA using the four ribonucleoside triphosphates as substrates. The sequence is that of DNA-directed RNA polymerase subunit alpha from Beutenbergia cavernae (strain ATCC BAA-8 / DSM 12333 / CCUG 43141 / JCM 11478 / NBRC 16432 / NCIMB 13614 / HKI 0122).